The primary structure comprises 281 residues: Pantothenate synthetase (281 aa).

30-37 (MGYLHEGH) provides a ligand contact to ATP. The active-site Proton donor is H37. Q61 is a (R)-pantoate binding site. Q61 lines the beta-alanine pocket. An ATP-binding site is contributed by 147–150 (GEKD). Q153 is a binding site for (R)-pantoate. ATP-binding positions include I176 and 184 to 187 (KSSR).

It belongs to the pantothenate synthetase family. Homodimer.

The protein localises to the cytoplasm. It carries out the reaction (R)-pantoate + beta-alanine + ATP = (R)-pantothenate + AMP + diphosphate + H(+). Its pathway is cofactor biosynthesis; (R)-pantothenate biosynthesis; (R)-pantothenate from (R)-pantoate and beta-alanine: step 1/1. Catalyzes the condensation of pantoate with beta-alanine in an ATP-dependent reaction via a pantoyl-adenylate intermediate. In Clostridium botulinum (strain Kyoto / Type A2), this protein is Pantothenate synthetase.